A 419-amino-acid polypeptide reads, in one-letter code: Histidine--tRNA ligase (419 aa).

This sequence belongs to the class-II aminoacyl-tRNA synthetase family. As to quaternary structure, homodimer.

The protein resides in the cytoplasm. The catalysed reaction is tRNA(His) + L-histidine + ATP = L-histidyl-tRNA(His) + AMP + diphosphate + H(+). The protein is Histidine--tRNA ligase of Trichlorobacter lovleyi (strain ATCC BAA-1151 / DSM 17278 / SZ) (Geobacter lovleyi).